The chain runs to 130 residues: Movement protein TGB2 (130 aa).

Residues 1 to 12 lie on the Cytoplasmic side of the membrane; that stretch reads MPGLTPPVNYEQ. The helical transmembrane segment at 13–30 threads the bilayer; sequence VYKVLAIGFLLCASIYCL. Residues 31-72 are Lumenal-facing; sequence RSNHLPHVGDNIHSLPHGGNYADGTKRVQYFRPHSSTSTNHK. Residues 73–90 form a helical membrane-spanning segment; the sequence is YTALCAVLTLSLLIFAQT. At 91–130 the chain is on the cytoplasmic side; it reads RLAAGNRITSVSICHHCSSQGSLSGGNHGRVSGHSELPTT. The disordered stretch occupies residues 110–130; it reads QGSLSGGNHGRVSGHSELPTT.

This sequence belongs to the Tymovirales TGBp2 protein family.

It is found in the host endoplasmic reticulum membrane. Plays a role in viral cell-to-cell propagation, by facilitating genome transport to neighboring plant cells through plasmosdesmata,. This Narcissus pseudonarcissus (Daffodil) protein is Movement protein TGB2.